The sequence spans 185 residues: Large ribosomal subunit protein bL25 (185 aa).

Belongs to the bacterial ribosomal protein bL25 family. CTC subfamily. As to quaternary structure, part of the 50S ribosomal subunit; part of the 5S rRNA/L5/L18/L25 subcomplex. Contacts the 5S rRNA. Binds to the 5S rRNA independently of L5 and L18.

In terms of biological role, this is one of the proteins that binds to the 5S RNA in the ribosome where it forms part of the central protuberance. The sequence is that of Large ribosomal subunit protein bL25 from Laribacter hongkongensis (strain HLHK9).